The primary structure comprises 280 residues: MKYFEFTFHTSPCTETVNDVLAAVLGEAGFESFVESEGGLTAYIQQALCDENTIKNAITEFPLPDTEITYTYVEAEDKDWNEEWEKNFFQPIVIDNRCVIHSTFHKDVPQATYDIVINPQMAFGTGHHETTSLIIGELLDNELKDKSLLDMGCGTSILAILARMRGARPCIAIDIDEWCVRNSIENIELNHVDDIAVSQGDASSLVGKGPFDIIIANINRNILLNDMKQYVACMHPGSELYMSGFYVDDIPFIRREAEKNGLTFVHHKEKNRWAAVKFTY.

Residues Thr131, Gly152, Asp174, and Asn217 each contribute to the S-adenosyl-L-methionine site.

It belongs to the methyltransferase superfamily. PrmA family.

It localises to the cytoplasm. It catalyses the reaction L-lysyl-[protein] + 3 S-adenosyl-L-methionine = N(6),N(6),N(6)-trimethyl-L-lysyl-[protein] + 3 S-adenosyl-L-homocysteine + 3 H(+). Functionally, methylates ribosomal protein L11. The chain is Ribosomal protein L11 methyltransferase from Bacteroides thetaiotaomicron (strain ATCC 29148 / DSM 2079 / JCM 5827 / CCUG 10774 / NCTC 10582 / VPI-5482 / E50).